The primary structure comprises 211 residues: Probable cytokinin riboside 5'-monophosphate phosphoribohydrolase LOGL3 (211 aa).

Substrate contacts are provided by residues E84, 102 to 103 (RK), 119 to 125 (GYGTLEE), and T131.

The protein belongs to the LOG family. In terms of tissue distribution, expressed in roots, leaves, stems, tiller buds, shoot apex, immature inflorescences and flowers.

It catalyses the reaction N(6)-(dimethylallyl)adenosine 5'-phosphate + H2O = N(6)-dimethylallyladenine + D-ribose 5-phosphate. The enzyme catalyses 9-ribosyl-trans-zeatin 5'-phosphate + H2O = trans-zeatin + D-ribose 5-phosphate. Its function is as follows. Cytokinin-activating enzyme working in the direct activation pathway. Phosphoribohydrolase that converts inactive cytokinin nucleotides to the biologically active free-base forms. This Oryza sativa subsp. japonica (Rice) protein is Probable cytokinin riboside 5'-monophosphate phosphoribohydrolase LOGL3 (LOGL3).